We begin with the raw amino-acid sequence, 198 residues long: Elongation factor Ts (198 aa).

Residues 81 to 84 (TDFV) are involved in Mg(2+) ion dislocation from EF-Tu.

This sequence belongs to the EF-Ts family.

Its subcellular location is the cytoplasm. Functionally, associates with the EF-Tu.GDP complex and induces the exchange of GDP to GTP. It remains bound to the aminoacyl-tRNA.EF-Tu.GTP complex up to the GTP hydrolysis stage on the ribosome. This is Elongation factor Ts from Dictyoglomus thermophilum (strain ATCC 35947 / DSM 3960 / H-6-12).